The following is a 361-amino-acid chain: PTI1-like tyrosine-protein kinase At3g15890 (361 aa).

Residues F39 to F328 form the Protein kinase domain. Residues L45–V53 and K67 contribute to the ATP site. D165 (proton acceptor) is an active-site residue. 2 disordered regions span residues T195–E219 and E323–E361. Positions L351 to E361 are enriched in basic and acidic residues.

This sequence belongs to the protein kinase superfamily. Tyr protein kinase family.

It catalyses the reaction L-tyrosyl-[protein] + ATP = O-phospho-L-tyrosyl-[protein] + ADP + H(+). In Arabidopsis thaliana (Mouse-ear cress), this protein is PTI1-like tyrosine-protein kinase At3g15890.